A 171-amino-acid chain; its full sequence is NADH-quinone oxidoreductase subunit B (171 aa).

Positions 34, 35, 99, and 128 each coordinate [4Fe-4S] cluster.

This sequence belongs to the complex I 20 kDa subunit family. In terms of assembly, NDH-1 is composed of 14 different subunits. Subunits NuoB, C, D, E, F, and G constitute the peripheral sector of the complex. The cofactor is [4Fe-4S] cluster.

It is found in the cell inner membrane. The catalysed reaction is a quinone + NADH + 5 H(+)(in) = a quinol + NAD(+) + 4 H(+)(out). In terms of biological role, NDH-1 shuttles electrons from NADH, via FMN and iron-sulfur (Fe-S) centers, to quinones in the respiratory chain. The immediate electron acceptor for the enzyme in this species is believed to be ubiquinone. Couples the redox reaction to proton translocation (for every two electrons transferred, four hydrogen ions are translocated across the cytoplasmic membrane), and thus conserves the redox energy in a proton gradient. This chain is NADH-quinone oxidoreductase subunit B, found in Sulfurihydrogenibium sp. (strain YO3AOP1).